A 112-amino-acid polypeptide reads, in one-letter code: Colipase (112 aa).

Residues 1 to 17 (MEKILILLLVALSVAYA) form the signal peptide. Residues 18-22 (APGPR) constitute a propeptide, enterostatin, activation peptide. Cystine bridges form between Cys-34/Cys-45, Cys-40/Cys-56, Cys-44/Cys-78, Cys-66/Cys-86, and Cys-80/Cys-104.

Belongs to the colipase family. Forms a 1:1 stoichiometric complex with pancreatic lipase. As to expression, expressed by the pancreas.

It localises to the secreted. Its function is as follows. Colipase is a cofactor of pancreatic lipase. It allows the lipase to anchor itself to the lipid-water interface. Without colipase the enzyme is washed off by bile salts, which have an inhibitory effect on the lipase. In terms of biological role, enterostatin has a biological activity as a satiety signal. The protein is Colipase of Homo sapiens (Human).